The chain runs to 146 residues: Hemoglobin subunit beta (146 aa).

A Blocked amino end (Thr) modification is found at threonine 1. Positions 2–146 (HWTAEERHYI…VAHALTLQYH (145 aa)) constitute a Globin domain. Positions 63 and 92 each coordinate heme b.

The protein belongs to the globin family. Heterotetramer of two alpha chains and two beta chains. In terms of tissue distribution, red blood cells.

Functionally, involved in oxygen transport from the lung to the various peripheral tissues. The chain is Hemoglobin subunit beta (HBB) from Caretta caretta (Loggerhead sea turtle).